The primary structure comprises 295 residues: MSSRKSTASSLLLRQYRELTDPKKAIPSFHIELEDDSNIFTWNIGVMVLNEDSIYHGGFFKAQMRFPEDFPFSPPQFRFTPAIYHPNVYRDGRLCISILHQSGDPMTDEPDAETWSPVQTVESVLISIVSLLEDPNINSPANVDAAVDYRKNPEQYKQRVKMEVERSKQDIPKGFIMPTSESAYISQSKLDEPESNKDMADNFWYDSDLDDDENGSVILQDDDYDDGNNHIPFEDDDVYNYNDNDDDDERIEFEDDDDDDDDSIDNDSVMDRKQPHKAEDESEDVEDVERVSKKI.

The 163-residue stretch at Thr-7–Gln-169 folds into the UBC core domain. The active-site Glycyl thioester intermediate is the Cys-95. Residues Ile-185–Ile-295 are disordered. Ser-186 is subject to Phosphoserine. Residues Lys-189 to Ala-200 show a composition bias toward basic and acidic residues. Composition is skewed to acidic residues over residues Ser-207–Asp-226 and Glu-234–Asp-265. The segment covering Val-269 to Glu-279 has biased composition (basic and acidic residues). Phosphoserine is present on residues Ser-282 and Ser-292.

The protein belongs to the ubiquitin-conjugating enzyme family. As to quaternary structure, interacts with CDC53. Component of the E3 ubiquitin ligase complexes SCF with CDC53, SKP1/CBF3D, HRT1 and some F-box proteins like MET30 and CDC4.

It localises to the cytoplasm. The protein resides in the nucleus. The catalysed reaction is S-ubiquitinyl-[E1 ubiquitin-activating enzyme]-L-cysteine + [E2 ubiquitin-conjugating enzyme]-L-cysteine = [E1 ubiquitin-activating enzyme]-L-cysteine + S-ubiquitinyl-[E2 ubiquitin-conjugating enzyme]-L-cysteine.. Its pathway is protein modification; protein ubiquitination. In terms of biological role, catalyzes the covalent attachment of ubiquitin to other proteins. Capable, in vitro, to ubiquitinate histone H2A. Mediates the initiation of DNA replication (transition of G1 to S phase in cell cycle). Essential component of the E3 ubiquitin ligase complex SCF (SKP1-CUL1-F-box protein), which mediates the ubiquitination and subsequent proteasomal degradation of target proteins. Involved in the regulation of methionine biosynthesis genes and in the degradation of CDC6 together with CDC4 and CDC53. This is Ubiquitin-conjugating enzyme E2-34 kDa (CDC34) from Saccharomyces cerevisiae (strain ATCC 204508 / S288c) (Baker's yeast).